The sequence spans 303 residues: Cytidine deaminase (303 aa).

2 CMP/dCMP-type deaminase domains span residues 57 to 172 (TDKE…YLPD) and 196 to 303 (ITED…IQVS). 98–100 (NQE) is a substrate binding site. His111 lines the Zn(2+) pocket. The active-site Proton donor is Glu113. Residues Cys138 and Cys141 each coordinate Zn(2+).

Belongs to the cytidine and deoxycytidylate deaminase family. In terms of assembly, homodimer. Requires Zn(2+) as cofactor.

The enzyme catalyses cytidine + H2O + H(+) = uridine + NH4(+). The catalysed reaction is 2'-deoxycytidine + H2O + H(+) = 2'-deoxyuridine + NH4(+). In terms of biological role, this enzyme scavenges exogenous and endogenous cytidine and 2'-deoxycytidine for UMP synthesis. In Histophilus somni (strain 2336) (Haemophilus somnus), this protein is Cytidine deaminase.